A 429-amino-acid polypeptide reads, in one-letter code: Glutamate-1-semialdehyde 2,1-aminomutase 2 (429 aa).

An N6-(pyridoxal phosphate)lysine modification is found at lysine 268.

It belongs to the class-III pyridoxal-phosphate-dependent aminotransferase family. HemL subfamily. In terms of assembly, homodimer. It depends on pyridoxal 5'-phosphate as a cofactor.

The protein resides in the cytoplasm. The catalysed reaction is (S)-4-amino-5-oxopentanoate = 5-aminolevulinate. The protein operates within porphyrin-containing compound metabolism; protoporphyrin-IX biosynthesis; 5-aminolevulinate from L-glutamyl-tRNA(Glu): step 2/2. The chain is Glutamate-1-semialdehyde 2,1-aminomutase 2 from Bacillus cereus (strain AH820).